Reading from the N-terminus, the 159-residue chain is Aspartate carbamoyltransferase regulatory chain (159 aa).

4 residues coordinate Zn(2+): Cys-111, Cys-116, Cys-141, and Cys-144.

The protein belongs to the PyrI family. As to quaternary structure, contains catalytic and regulatory chains. It depends on Zn(2+) as a cofactor.

In terms of biological role, involved in allosteric regulation of aspartate carbamoyltransferase. In Aeropyrum pernix (strain ATCC 700893 / DSM 11879 / JCM 9820 / NBRC 100138 / K1), this protein is Aspartate carbamoyltransferase regulatory chain.